Here is a 129-residue protein sequence, read N- to C-terminus: Small ribosomal subunit protein uS11c (129 aa).

This sequence belongs to the universal ribosomal protein uS11 family. Part of the 30S ribosomal subunit.

The protein localises to the plastid. The protein resides in the chloroplast. The protein is Small ribosomal subunit protein uS11c of Oltmannsiellopsis viridis (Marine flagellate).